Consider the following 28-residue polypeptide: Short cationic peptide-1a (28 aa).

Glu28 bears the Glutamic acid 1-amide mark.

In terms of tissue distribution, expressed by the venom gland.

The protein resides in the secreted. The sequence is that of Short cationic peptide-1a from Cupiennius salei (American wandering spider).